A 990-amino-acid chain; its full sequence is Protein SUPPRESSOR OF MAX2 1 (990 aa).

One can recognise a Clp R domain in the interval 8–167 (IQQTLTPEAA…KATIEQSLNN (160 aa)). 2 repeat regions span residues 12–83 (LTPE…LERL) and 96–167 (ISNA…SLNN). Residues 818–855 (PKKEHGSGLSFDLNQAADTDDGSHNTSDLTTDNDQDEQ) are disordered. The EAR signature appears at 828-832 (FDLNQ).

It belongs to the ClpA/ClpB family. Interacts probably with TPL/TPR in an EAR-motif dependent manner. Interacts with TPL, TPR1, TPR2 and TPR4. Highly expressed in dry seeds. Expressed in seedlings, rosette leaves and senescing leaves. Detected in roots and axillary shoots. Expressed in the primary rosette buds and expanding leaves of adult rosettes, the vasculature of the hypocotyls, cotyledons, and mature roots, in the midvein and petioles of young leaves, the young leaf periphery, stomata, and the root caps.

Probable component of a transcriptional corepressor complex that acts downstream of MAX2 to negatively regulate karrikins/strigolactone responses. Probable target of MAX2 during germination and seedling photomorphogenesis. Acts probably specifically in the karrikin pathway. The polypeptide is Protein SUPPRESSOR OF MAX2 1 (Arabidopsis thaliana (Mouse-ear cress)).